The primary structure comprises 77 residues: Small ribosomal subunit protein bS16c (77 aa).

Belongs to the bacterial ribosomal protein bS16 family.

It is found in the plastid. It localises to the cyanelle. The protein is Small ribosomal subunit protein bS16c of Cyanophora paradoxa.